Here is a 157-residue protein sequence, read N- to C-terminus: Protein-export protein SecB (157 aa).

The protein belongs to the SecB family. In terms of assembly, homotetramer, a dimer of dimers. One homotetramer interacts with 1 SecA dimer.

It is found in the cytoplasm. One of the proteins required for the normal export of preproteins out of the cell cytoplasm. It is a molecular chaperone that binds to a subset of precursor proteins, maintaining them in a translocation-competent state. It also specifically binds to its receptor SecA. The chain is Protein-export protein SecB from Proteus mirabilis (strain HI4320).